The primary structure comprises 91 residues: N(2)-fixation sustaining protein CowN (91 aa).

It belongs to the CowN family.

Its function is as follows. Is required to sustain N(2)-dependent growth in the presence of low levels of carbon monoxide (CO). Probably acts by protecting the N(2) fixation ability of the nitrogenase complex, which is inactivated in the presence of CO. The polypeptide is N(2)-fixation sustaining protein CowN (Beijerinckia indica subsp. indica (strain ATCC 9039 / DSM 1715 / NCIMB 8712)).